Reading from the N-terminus, the 69-residue chain is Large ribosomal subunit protein uL29 (69 aa).

This sequence belongs to the universal ribosomal protein uL29 family.

In Lachnoclostridium phytofermentans (strain ATCC 700394 / DSM 18823 / ISDg) (Clostridium phytofermentans), this protein is Large ribosomal subunit protein uL29.